The following is a 230-amino-acid chain: uncharacterized protein (230 aa).

Positions 1–18 are cleaved as a signal peptide; it reads MRQYTSKSILFMTAIALS.

This is an uncharacterized protein from Pasteurella multocida (strain Pm70).